The sequence spans 223 residues: DnaJ homolog subfamily B member 9 (223 aa).

The first 23 residues, 1–23 (MATPQSIFIFAICILMITELILA), serve as a signal peptide directing secretion. Residues 26–90 (SYYDILGVPK…NRRKEYDTLG (65 aa)) enclose the J domain. The divergent targeting domain stretch occupies residues 91-223 (HSAFTNGKGQ…VTTYTDCSGQ (133 aa)). Residue Ser133 is modified to Phosphoserine.

Interacts with HSPA5/BiP; interaction is direct. Interacts with ERN1/IRE1 (via the luminal region). Interacts with DERL1.

It localises to the endoplasmic reticulum lumen. Its function is as follows. Co-chaperone for Hsp70 protein HSPA5/BiP that acts as a key repressor of the ERN1/IRE1-mediated unfolded protein response (UPR). J domain-containing co-chaperones stimulate the ATPase activity of Hsp70 proteins and are required for efficient substrate recognition by Hsp70 proteins. In the unstressed endoplasmic reticulum, interacts with the luminal region of ERN1/IRE1 and selectively recruits HSPA5/BiP: HSPA5/BiP disrupts the dimerization of the active ERN1/IRE1 luminal region, thereby inactivating ERN1/IRE1. Also involved in endoplasmic reticulum-associated degradation (ERAD) of misfolded proteins. Required for survival of B-cell progenitors and normal antibody production. This chain is DnaJ homolog subfamily B member 9, found in Pongo abelii (Sumatran orangutan).